A 152-amino-acid chain; its full sequence is Xanthine-guanine phosphoribosyltransferase (152 aa).

Residues 37-38 and 88-96 each bind 5-phospho-alpha-D-ribose 1-diphosphate; these read RG and DDLVDTGNT. Asp-89 is a Mg(2+) binding site. Asp-92 and Ile-135 together coordinate guanine. 2 residues coordinate xanthine: Asp-92 and Ile-135. GMP-binding positions include 92–96 and 134–135; these read DTGNT and WI.

Belongs to the purine/pyrimidine phosphoribosyltransferase family. XGPT subfamily. Homotetramer. Mg(2+) is required as a cofactor.

Its subcellular location is the cell inner membrane. It catalyses the reaction GMP + diphosphate = guanine + 5-phospho-alpha-D-ribose 1-diphosphate. The enzyme catalyses XMP + diphosphate = xanthine + 5-phospho-alpha-D-ribose 1-diphosphate. It carries out the reaction IMP + diphosphate = hypoxanthine + 5-phospho-alpha-D-ribose 1-diphosphate. It participates in purine metabolism; GMP biosynthesis via salvage pathway; GMP from guanine: step 1/1. It functions in the pathway purine metabolism; XMP biosynthesis via salvage pathway; XMP from xanthine: step 1/1. Its function is as follows. Purine salvage pathway enzyme that catalyzes the transfer of the ribosyl-5-phosphate group from 5-phospho-alpha-D-ribose 1-diphosphate (PRPP) to the N9 position of the 6-oxopurines guanine and xanthine to form the corresponding ribonucleotides GMP (guanosine 5'-monophosphate) and XMP (xanthosine 5'-monophosphate), with the release of PPi. To a lesser extent, also acts on hypoxanthine. This Mannheimia succiniciproducens (strain KCTC 0769BP / MBEL55E) protein is Xanthine-guanine phosphoribosyltransferase.